The sequence spans 910 residues: DNA mismatch repair protein MutS (910 aa).

Residues 1–11 are compositionally biased toward basic and acidic residues; the sequence is MEAKVEEKEPE. The segment at 1-21 is disordered; that stretch reads MEAKVEEKEPEPVENAGPDAP. Residue 658–665 participates in ATP binding; that stretch reads GPNMGGKS.

The protein belongs to the DNA mismatch repair MutS family.

Functionally, this protein is involved in the repair of mismatches in DNA. It is possible that it carries out the mismatch recognition step. This protein has a weak ATPase activity. This chain is DNA mismatch repair protein MutS, found in Brucella melitensis biotype 1 (strain ATCC 23456 / CCUG 17765 / NCTC 10094 / 16M).